Reading from the N-terminus, the 116-residue chain is Beta-2-microglobulin (116 aa).

A signal peptide spans 1–19 (MKFLLSFVVLAVFSASAFA). One can recognise an Ig-like C1-type domain in the interval 24-111 (PKIQVYSRNP…RHLKETKNIS (88 aa)). A disulfide bond links Cys44 and Cys99.

It belongs to the beta-2-microglobulin family. In terms of assembly, heterodimer of an alpha chain and a beta chain. Beta-2-microglobulin is the beta-chain of major histocompatibility complex class I molecules.

It is found in the secreted. In terms of biological role, component of the class I major histocompatibility complex (MHC). Involved in the presentation of peptide antigens to the immune system. This is Beta-2-microglobulin (b2m) from Ictalurus punctatus (Channel catfish).